The following is a 105-amino-acid chain: Large ribosomal subunit protein bL21 (105 aa).

The protein belongs to the bacterial ribosomal protein bL21 family. Part of the 50S ribosomal subunit. Contacts protein L20.

In terms of biological role, this protein binds to 23S rRNA in the presence of protein L20. The polypeptide is Large ribosomal subunit protein bL21 (Bacteroides fragilis (strain YCH46)).